We begin with the raw amino-acid sequence, 119 residues long: Gas vesicle protein O1 (119 aa).

A compositionally biased stretch (basic and acidic residues) spans 1–12 (MADPANDRSERE). The interval 1-48 (MADPANDRSEREEGGEDDETPPASDGNPSPSANSFTLSNAQTRAREAA) is disordered. Polar residues predominate over residues 26–42 (GNPSPSANSFTLSNAQT).

The protein belongs to the gas vesicle GvpO family. Forms homodimers, forms a GvpN1-GvpO1 heterodimer, interacts with GvpC1 (via the latter's C-terminus), GvpF1, GvpI1 and GvpL1, might interact with GvpA1.

The protein resides in the gas vesicle. It is found in the cytoplasm. In terms of biological role, a minor component of the gas vesicle, also found in soluble extracts. May play a role in transcription and/or RNA stability and in GV assembly. Gas vesicles are hollow, gas filled proteinaceous nanostructures found in several microbial planktonic microorganisms. They allow positioning of halobacteria at the optimal depth for growth in the poorly aerated, shallow brine pools of their habitat. Its function is as follows. Expression of a 9.5 kb p-vac DNA fragment containing 2 divergently transcribed regions (gvpD-gvpE-gvpF-gvpG-gvpH-gvpI-gvpJ-gvpK-gvpL-gvpM and gvpA-gvpC-gvpN-gvpO) allows H.volcanii to produce gas vesicles. A minimal gas vesicle can be made in H.volcanii by gvpA1-gvpO1 gvpF1-gvpG1-gvpJ1-gvpK1-gvpL1-gvpM1; lack of enough GvpJ1 prevents formation. The same region restores gas vesicle production in H.halobium without the p-vac locus, but it still has the c-vac locus. This is Gas vesicle protein O1 from Halobacterium salinarum (strain ATCC 700922 / JCM 11081 / NRC-1) (Halobacterium halobium).